Here is a 252-residue protein sequence, read N- to C-terminus: Pyridoxine 5'-phosphate synthase (252 aa).

3-amino-2-oxopropyl phosphate contacts are provided by Asn-8 and Arg-19. The active-site Proton acceptor is His-44. 1-deoxy-D-xylulose 5-phosphate-binding residues include Arg-46 and His-51. The Proton acceptor role is filled by Glu-75. A 1-deoxy-D-xylulose 5-phosphate-binding site is contributed by Thr-110. Catalysis depends on His-201, which acts as the Proton donor. 3-amino-2-oxopropyl phosphate contacts are provided by residues Asp-202 and 224 to 225; that span reads GH.

It belongs to the PNP synthase family. As to quaternary structure, homooctamer; tetramer of dimers.

It localises to the cytoplasm. The enzyme catalyses 3-amino-2-oxopropyl phosphate + 1-deoxy-D-xylulose 5-phosphate = pyridoxine 5'-phosphate + phosphate + 2 H2O + H(+). It functions in the pathway cofactor biosynthesis; pyridoxine 5'-phosphate biosynthesis; pyridoxine 5'-phosphate from D-erythrose 4-phosphate: step 5/5. Functionally, catalyzes the complicated ring closure reaction between the two acyclic compounds 1-deoxy-D-xylulose-5-phosphate (DXP) and 3-amino-2-oxopropyl phosphate (1-amino-acetone-3-phosphate or AAP) to form pyridoxine 5'-phosphate (PNP) and inorganic phosphate. The chain is Pyridoxine 5'-phosphate synthase from Albidiferax ferrireducens (strain ATCC BAA-621 / DSM 15236 / T118) (Rhodoferax ferrireducens).